Here is a 459-residue protein sequence, read N- to C-terminus: ATP synthase subunit beta 1 (459 aa).

An ATP-binding site is contributed by 148-155; it reads GGAGVGKT.

This sequence belongs to the ATPase alpha/beta chains family. In terms of assembly, F-type ATPases have 2 components, CF(1) - the catalytic core - and CF(0) - the membrane proton channel. CF(1) has five subunits: alpha(3), beta(3), gamma(1), delta(1), epsilon(1). CF(0) has three main subunits: a(1), b(2) and c(9-12). The alpha and beta chains form an alternating ring which encloses part of the gamma chain. CF(1) is attached to CF(0) by a central stalk formed by the gamma and epsilon chains, while a peripheral stalk is formed by the delta and b chains.

Its subcellular location is the cell inner membrane. The enzyme catalyses ATP + H2O + 4 H(+)(in) = ADP + phosphate + 5 H(+)(out). Its function is as follows. Produces ATP from ADP in the presence of a proton gradient across the membrane. The catalytic sites are hosted primarily by the beta subunits. This is ATP synthase subunit beta 1 from Nitrosospira multiformis (strain ATCC 25196 / NCIMB 11849 / C 71).